A 218-amino-acid chain; its full sequence is LexA repressor (218 aa).

The H-T-H motif DNA-binding region spans 28 to 48 (RAEIAAEFGFSSPNAAEEHLR). Residues Ser136 and Lys173 each act as for autocatalytic cleavage activity in the active site.

The protein belongs to the peptidase S24 family. As to quaternary structure, homodimer.

The enzyme catalyses Hydrolysis of Ala-|-Gly bond in repressor LexA.. Functionally, represses a number of genes involved in the response to DNA damage (SOS response), including recA and lexA. In the presence of single-stranded DNA, RecA interacts with LexA causing an autocatalytic cleavage which disrupts the DNA-binding part of LexA, leading to derepression of the SOS regulon and eventually DNA repair. This is LexA repressor from Cupriavidus pinatubonensis (strain JMP 134 / LMG 1197) (Cupriavidus necator (strain JMP 134)).